The chain runs to 495 residues: Putative lon protease homolog (495 aa).

52–59 (GPPGVGKS) contacts ATP. A disordered region spans residues 471 to 495 (YSSETTGSQRDSTYNYANMDDRSYE). The segment covering 472–486 (SSETTGSQRDSTYNY) has biased composition (polar residues).

This sequence belongs to the peptidase S16 family.

In Thermoplasma volcanium (strain ATCC 51530 / DSM 4299 / JCM 9571 / NBRC 15438 / GSS1), this protein is Putative lon protease homolog.